Reading from the N-terminus, the 123-residue chain is Putative oocyte-secreted protein 1 homolog (123 aa).

Positions 1–26 (MKTILGFKGLFYLHSLIWTCAGDWSA) are cleaved as a signal peptide.

It belongs to the PLAC1 family.

The protein resides in the secreted. In terms of biological role, may be involved in cell differentiation. In Homo sapiens (Human), this protein is Putative oocyte-secreted protein 1 homolog (OOSP1).